The primary structure comprises 141 residues: Auxin-responsive protein SAUR61 (141 aa).

Belongs to the ARG7 family.

The protein resides in the cell membrane. In terms of biological role, may promote auxin-stimulated organ elongation, such as hypocotyls, stamen filaments and petals. The polypeptide is Auxin-responsive protein SAUR61 (Arabidopsis thaliana (Mouse-ear cress)).